The chain runs to 139 residues: Lysozyme (139 aa).

An N-terminal signal peptide occupies residues 1-19 (MTKYVILLAVLAFALHCDA). A C-type lysozyme domain is found at 20–139 (KRFTRCGLVQ…QHGLPDISDC (120 aa)). Cystine bridges form between Cys-25-Cys-139, Cys-46-Cys-129, Cys-81-Cys-95, and Cys-91-Cys-109. Active-site residues include Glu-51 and Asp-69.

It belongs to the glycosyl hydrolase 22 family.

The catalysed reaction is Hydrolysis of (1-&gt;4)-beta-linkages between N-acetylmuramic acid and N-acetyl-D-glucosamine residues in a peptidoglycan and between N-acetyl-D-glucosamine residues in chitodextrins.. Functionally, lysozymes have primarily a bacteriolytic function; those in tissues and body fluids are associated with the monocyte-macrophage system and enhance the activity of immunoagents. The polypeptide is Lysozyme (Hyalophora cecropia (Cecropia moth)).